The following is a 196-amino-acid chain: uncharacterized protein (196 aa).

FAD contacts are provided by residues S15–T22, G68–M71, Y107, and T123–A126.

Belongs to the oxidoreductase MdaB family. It depends on FAD as a cofactor.

This is an uncharacterized protein from Schizosaccharomyces pombe (strain 972 / ATCC 24843) (Fission yeast).